A 336-amino-acid polypeptide reads, in one-letter code: MFVNSDNYIKYLKLWLITLFSLIVLMVAVGGLTRLTDSGLSITAWELFTGILPPMNINEWNFYFTEYKKIPEYKNINYGMSLDEFKVIFYWEYAHRLLARFVGLFTLVPLLFFTLYFKKTLHYSNKYYWIFFLVCLQGFIGWYMVSSGLIENNDVSHFRLSIHLSLALFILCLIFWYILDIHKIKKFENKIPNLFLLFILKLIVLQIVLGAFLSGLDGGLIYNSWPDMNGSFFPNDVSYGDLITTQLFNNPSIIQFLHRSTAYLLLFFIIILNFIYFKKQYDFKYVLFFDVAILFQIFLGIITLISGVEITYASLHQLGSILVLSSYFLILYKNSN.

8 consecutive transmembrane segments (helical) span residues 12-32, 97-117, 130-150, 161-181, 194-214, 256-276, 285-305, and 310-330; these read LKLW…VGGL, LLAR…TLYF, IFFL…SGLI, SIHL…ILDI, LFLL…AFLS, FLHR…NFIY, YVLF…ITLI, and ITYA…YFLI. Histidine 258 is a heme binding site. Heme is bound at residue histidine 316.

Belongs to the COX15/CtaA family. Type 2 subfamily. Interacts with CtaB. It depends on heme b as a cofactor.

The protein localises to the cell membrane. It catalyses the reaction Fe(II)-heme o + 2 A + H2O = Fe(II)-heme a + 2 AH2. The protein operates within porphyrin-containing compound metabolism; heme A biosynthesis; heme A from heme O: step 1/1. Catalyzes the conversion of heme O to heme A by two successive hydroxylations of the methyl group at C8. The first hydroxylation forms heme I, the second hydroxylation results in an unstable dihydroxymethyl group, which spontaneously dehydrates, resulting in the formyl group of heme A. This Pelagibacter ubique (strain HTCC1062) protein is Heme A synthase.